The sequence spans 435 residues: MYGRNFPFFNSLGGFYPRGNGFPLDAPSLDPRKPSGTGYTSKVRVRDKYRIVGFISSGTYGRVYKAIGKNGEKREFAIKKFKPDKEGEIIQYTGLSQSAIREMSLCSELDHPNVVQLEEIILEDKCIFMVFEYTEHDLLQIIHHHTQPQRHAIPAPMVRSILFQLLNGLLYLHTNWVLHRDLKPANILVTSSGAIRVGDLGLARLFYKPLNSLFSGDKVVVTIWYRAPELLMGSRHYTPAVDLWAVGCIFAELLSLRPIFKGEEAKMDSKKTVPFQRNQMMKIIEIMGLPTKEIWPGITSMPEFSQLQSLAMSRAPHFNRSSNLENWYQSCLKNGGYSANSSAGTPGADGFDLLSRLLEYDPTKRITAREALEHPYFKNGGPISANCFEGFEGKYPHRRVTQDDNDIRSGSLPGTKRSGLPDDSLMGRASKRIKE.

Residues 49 to 377 (YRIVGFISSG…AREALEHPYF (329 aa)) form the Protein kinase domain. ATP is bound by residues 55–63 (ISSGTYGRV) and lysine 79. Aspartate 181 serves as the catalytic Proton acceptor. A compositionally biased stretch (basic and acidic residues) spans 398–407 (RRVTQDDNDI). The segment at 398–435 (RRVTQDDNDIRSGSLPGTKRSGLPDDSLMGRASKRIKE) is disordered.

This sequence belongs to the protein kinase superfamily. CMGC Ser/Thr protein kinase family. CDC2/CDKX subfamily. Component of the srb8-11 complex, a regulatory module of the Mediator complex. Mg(2+) serves as cofactor.

The protein localises to the nucleus. It catalyses the reaction L-seryl-[protein] + ATP = O-phospho-L-seryl-[protein] + ADP + H(+). The enzyme catalyses L-threonyl-[protein] + ATP = O-phospho-L-threonyl-[protein] + ADP + H(+). It carries out the reaction [DNA-directed RNA polymerase] + ATP = phospho-[DNA-directed RNA polymerase] + ADP + H(+). Component of the srb8-11 complex. The srb8-11 complex is a regulatory module of the Mediator complex which is itself involved in regulation of basal and activated RNA polymerase II-dependent transcription. The srb8-11 complex may be involved in the transcriptional repression of a subset of genes regulated by Mediator. It may inhibit the association of the Mediator complex with RNA polymerase II to form the holoenzyme complex. The srb8-11 complex phosphorylates the C-terminal domain (CTD) of the largest subunit of RNA polymerase II. In Aspergillus terreus (strain NIH 2624 / FGSC A1156), this protein is Serine/threonine-protein kinase ssn3 (ssn3).